Here is a 504-residue protein sequence, read N- to C-terminus: Cytochrome P450 monooxygenase braC (504 aa).

A helical transmembrane segment spans residues 4-24 (LYLPTIWASTLTAATIFIVAV). Cysteine 448 is a binding site for heme.

Belongs to the cytochrome P450 family. Requires heme as cofactor.

Its subcellular location is the membrane. It participates in secondary metabolite biosynthesis. In terms of biological role, cytochrome P450 monooxygenase; part of the gene cluster that mediates the biosynthesis of the brasilane terpene glycosides brasilane D and E. The biosynthesis starts with the activity of the terpene cyclase braA that converts farnesyl pyrophosphate into the sesquiterpene alcohol trichobrasilenol. Subsequently, trichobrasilenol is glycosylated by the O-glycosyltransferase braB putatively using UDP-GlcNAc as sugar donor to yield brasilane A. The latter then undergoes two rounds of oxidation performed by the cytochrome P450 monooxygenase braC. In the first round braC hydroxylates C-12 forming brasilane D, which serves as substrate in the second round to establish the epoxide at the bond between C-5 and C-10 and oxidize the alcohol at C-12 to an aldehyde leading to the final product brasilane E. The polypeptide is Cytochrome P450 monooxygenase braC (Annulohypoxylon truncatum (Hypoxylon truncatum)).